A 20-amino-acid polypeptide reads, in one-letter code: IIYDXVGQCDKDFYRPELPR.

The sequence is that of Unknown protein from 2D-PAGE of needles from Pinus pinaster (Maritime pine).